The following is a 90-amino-acid chain: Putative regulatory protein Dred_1699 (90 aa).

Belongs to the RemA family.

The protein is Putative regulatory protein Dred_1699 of Desulforamulus reducens (strain ATCC BAA-1160 / DSM 100696 / MI-1) (Desulfotomaculum reducens).